The chain runs to 339 residues: Glyceraldehyde-3-phosphate dehydrogenase (339 aa).

NAD(+)-binding positions include 12–13, D39, R84, and S127; that span reads RI. Residues 157-159, T188, R203, 216-217, and R239 contribute to the D-glyceraldehyde 3-phosphate site; these read SCT and TG. The Nucleophile role is filled by C158. N320 contributes to the NAD(+) binding site.

This sequence belongs to the glyceraldehyde-3-phosphate dehydrogenase family. Homotetramer.

It is found in the cytoplasm. The catalysed reaction is D-glyceraldehyde 3-phosphate + phosphate + NAD(+) = (2R)-3-phospho-glyceroyl phosphate + NADH + H(+). The protein operates within carbohydrate degradation; glycolysis; pyruvate from D-glyceraldehyde 3-phosphate: step 1/5. Functionally, catalyzes the oxidative phosphorylation of glyceraldehyde 3-phosphate (G3P) to 1,3-bisphosphoglycerate (BPG) using the cofactor NAD. The first reaction step involves the formation of a hemiacetal intermediate between G3P and a cysteine residue, and this hemiacetal intermediate is then oxidized to a thioester, with concomitant reduction of NAD to NADH. The reduced NADH is then exchanged with the second NAD, and the thioester is attacked by a nucleophilic inorganic phosphate to produce BPG. This is Glyceraldehyde-3-phosphate dehydrogenase (gapA) from Mycobacterium leprae (strain TN).